The following is a 300-amino-acid chain: Glycine--tRNA ligase alpha subunit (300 aa).

Belongs to the class-II aminoacyl-tRNA synthetase family. In terms of assembly, tetramer of two alpha and two beta subunits.

The protein resides in the cytoplasm. It catalyses the reaction tRNA(Gly) + glycine + ATP = glycyl-tRNA(Gly) + AMP + diphosphate. In Buchnera aphidicola subsp. Baizongia pistaciae (strain Bp), this protein is Glycine--tRNA ligase alpha subunit (glyQ).